Consider the following 125-residue polypeptide: Putative superoxide reductase (125 aa).

Fe cation contacts are provided by E12, H14, H40, H46, C110, and H113.

The protein belongs to the desulfoferrodoxin family. Fe cation is required as a cofactor.

The enzyme catalyses reduced [rubredoxin] + superoxide + 2 H(+) = oxidized [rubredoxin] + H2O2. In terms of biological role, uses electrons from reduced NADP, by way of rubredoxin and an oxidoreductase, to catalyze the reduction of superoxide to hydrogen peroxide. This Archaeoglobus fulgidus (strain ATCC 49558 / DSM 4304 / JCM 9628 / NBRC 100126 / VC-16) protein is Putative superoxide reductase.